Consider the following 161-residue polypeptide: Phosphopantetheine adenylyltransferase (161 aa).

T10 contributes to the substrate binding site. ATP contacts are provided by residues 10–11 (TF) and H18. Residues K42, L74, and R88 each contribute to the substrate site. Residues 89-91 (GIR), E99, and 124-130 (WRYLSST) each bind ATP.

Belongs to the bacterial CoaD family. Homohexamer. Mg(2+) serves as cofactor.

It localises to the cytoplasm. It catalyses the reaction (R)-4'-phosphopantetheine + ATP + H(+) = 3'-dephospho-CoA + diphosphate. It participates in cofactor biosynthesis; coenzyme A biosynthesis; CoA from (R)-pantothenate: step 4/5. Functionally, reversibly transfers an adenylyl group from ATP to 4'-phosphopantetheine, yielding dephospho-CoA (dPCoA) and pyrophosphate. The sequence is that of Phosphopantetheine adenylyltransferase from Haemophilus ducreyi (strain 35000HP / ATCC 700724).